The sequence spans 284 residues: Diaminopimelate epimerase (284 aa).

Asn20, Gln53, and Asn73 together coordinate substrate. Cys82 functions as the Proton donor in the catalytic mechanism. Substrate contacts are provided by residues 83–84, Asn167, Asn200, and 218–219; these read GN and ER. Cys227 acts as the Proton acceptor in catalysis. 228 to 229 is a binding site for substrate; the sequence is GS.

The protein belongs to the diaminopimelate epimerase family. In terms of assembly, homodimer.

It localises to the cytoplasm. The enzyme catalyses (2S,6S)-2,6-diaminopimelate = meso-2,6-diaminopimelate. It functions in the pathway amino-acid biosynthesis; L-lysine biosynthesis via DAP pathway; DL-2,6-diaminopimelate from LL-2,6-diaminopimelate: step 1/1. Functionally, catalyzes the stereoinversion of LL-2,6-diaminopimelate (L,L-DAP) to meso-diaminopimelate (meso-DAP), a precursor of L-lysine and an essential component of the bacterial peptidoglycan. This chain is Diaminopimelate epimerase, found in Xylella fastidiosa (strain M12).